The chain runs to 158 residues: Protein-export protein SecB (158 aa).

It belongs to the SecB family. In terms of assembly, homotetramer, a dimer of dimers. One homotetramer interacts with 1 SecA dimer.

It is found in the cytoplasm. Functionally, one of the proteins required for the normal export of preproteins out of the cell cytoplasm. It is a molecular chaperone that binds to a subset of precursor proteins, maintaining them in a translocation-competent state. It also specifically binds to its receptor SecA. The chain is Protein-export protein SecB from Rhodopseudomonas palustris (strain HaA2).